A 252-amino-acid chain; its full sequence is Ditrans,polycis-undecaprenyl-diphosphate synthase ((2E,6E)-farnesyl-diphosphate specific) (252 aa).

Residue D24 is part of the active site. D24 provides a ligand contact to Mg(2+). Residues 25 to 28 (GNGR), W29, R37, H41, and 69 to 71 (SSE) contribute to the substrate site. Residue N72 is the Proton acceptor of the active site. Substrate is bound by residues W73, R75, and R192. H197 contributes to the Mg(2+) binding site. 198–200 (RIS) contacts substrate. E211 is a Mg(2+) binding site.

This sequence belongs to the UPP synthase family. As to quaternary structure, homodimer. Mg(2+) serves as cofactor.

The catalysed reaction is 8 isopentenyl diphosphate + (2E,6E)-farnesyl diphosphate = di-trans,octa-cis-undecaprenyl diphosphate + 8 diphosphate. Its function is as follows. Catalyzes the sequential condensation of isopentenyl diphosphate (IPP) with (2E,6E)-farnesyl diphosphate (E,E-FPP) to yield (2Z,6Z,10Z,14Z,18Z,22Z,26Z,30Z,34E,38E)-undecaprenyl diphosphate (di-trans,octa-cis-UPP). UPP is the precursor of glycosyl carrier lipid in the biosynthesis of bacterial cell wall polysaccharide components such as peptidoglycan and lipopolysaccharide. This chain is Ditrans,polycis-undecaprenyl-diphosphate synthase ((2E,6E)-farnesyl-diphosphate specific), found in Yersinia pestis.